Here is a 183-residue protein sequence, read N- to C-terminus: Translation initiation factor IF-3 (183 aa).

Belongs to the IF-3 family. Monomer.

It localises to the cytoplasm. Functionally, IF-3 binds to the 30S ribosomal subunit and shifts the equilibrium between 70S ribosomes and their 50S and 30S subunits in favor of the free subunits, thus enhancing the availability of 30S subunits on which protein synthesis initiation begins. This Pseudomonas putida (strain ATCC 700007 / DSM 6899 / JCM 31910 / BCRC 17059 / LMG 24140 / F1) protein is Translation initiation factor IF-3.